The following is a 174-amino-acid chain: RNA pyrophosphohydrolase (174 aa).

The 144-residue stretch at G6–K149 folds into the Nudix hydrolase domain. The Nudix box signature appears at G38 to G59.

Belongs to the Nudix hydrolase family. RppH subfamily. A divalent metal cation is required as a cofactor.

In terms of biological role, accelerates the degradation of transcripts by removing pyrophosphate from the 5'-end of triphosphorylated RNA, leading to a more labile monophosphorylated state that can stimulate subsequent ribonuclease cleavage. This is RNA pyrophosphohydrolase from Photobacterium profundum (strain SS9).